The chain runs to 695 residues: C6 finger domain transcription factor nscR (695 aa).

The zn(2)-C6 fungal-type DNA-binding region spans 17–43; it reads CELCRERKVKCDKLDPCTNCASAGVVC. The span at 101-113 shows a compositional bias: low complexity; the sequence is SMRSSASQSSNQD. The interval 101–146 is disordered; the sequence is SMRSSASQSSNQDQESRDAIESISNETEDASAPTPDSSRMPLGDGG.

It is found in the nucleus. Transcription factor that specifically regulates the neosartoricin B biosynthesis gene cluster. The sequence is that of C6 finger domain transcription factor nscR from Arthroderma otae (strain ATCC MYA-4605 / CBS 113480) (Microsporum canis).